A 408-amino-acid polypeptide reads, in one-letter code: Putative transporter AmpG 2 (408 aa).

A run of 11 helical transmembrane segments spans residues Ile11–Thr31, Ile49–Leu69, Tyr84–Asn104, Ile110–Ile130, Phe154–Trp174, Val177–Leu197, Cys224–Met244, Val261–Leu281, Val294–Leu311, Ile353–Tyr373, and Tyr382–Pro402.

This sequence belongs to the major facilitator superfamily.

The protein resides in the cell inner membrane. The chain is Putative transporter AmpG 2 (ampG2) from Rickettsia prowazekii (strain Madrid E).